The chain runs to 204 residues: Holliday junction branch migration complex subunit RuvA (204 aa).

A domain I region spans residues 1-64 (MIGRLRGVVI…EDAQLLYGFN (64 aa)). Residues 65–143 (HKQERALFRE…GWVSHDLFSP (79 aa)) form a domain II region. The segment at 144–155 (AEISLPARESVL) is flexible linker. A domain III region spans residues 156-204 (RAPDSSEEAASALVALGYKPQQASQIVSKIAKEGMSVEDIIRESLRSLV).

The protein belongs to the RuvA family. As to quaternary structure, homotetramer. Forms an RuvA(8)-RuvB(12)-Holliday junction (HJ) complex. HJ DNA is sandwiched between 2 RuvA tetramers; dsDNA enters through RuvA and exits via RuvB. An RuvB hexamer assembles on each DNA strand where it exits the tetramer. Each RuvB hexamer is contacted by two RuvA subunits (via domain III) on 2 adjacent RuvB subunits; this complex drives branch migration. In the full resolvosome a probable DNA-RuvA(4)-RuvB(12)-RuvC(2) complex forms which resolves the HJ.

It is found in the cytoplasm. The RuvA-RuvB-RuvC complex processes Holliday junction (HJ) DNA during genetic recombination and DNA repair, while the RuvA-RuvB complex plays an important role in the rescue of blocked DNA replication forks via replication fork reversal (RFR). RuvA specifically binds to HJ cruciform DNA, conferring on it an open structure. The RuvB hexamer acts as an ATP-dependent pump, pulling dsDNA into and through the RuvAB complex. HJ branch migration allows RuvC to scan DNA until it finds its consensus sequence, where it cleaves and resolves the cruciform DNA. The polypeptide is Holliday junction branch migration complex subunit RuvA (Aeromonas salmonicida (strain A449)).